The sequence spans 323 residues: Putative CDC123-like protein L884 (323 aa).

Belongs to the CDC123 family.

The polypeptide is Putative CDC123-like protein L884 (Acanthamoeba polyphaga mimivirus (APMV)).